The following is a 120-amino-acid chain: Cytochrome c oxidase subunit 5 (120 aa).

Blocked amino end (Ser) is present on Ser-2. 4 residues coordinate Zn(2+): Cys-76, His-84, Cys-99, and Cys-102.

Belongs to the cytochrome c oxidase subunit 5B family. Component of the cytochrome c oxidase (complex IV, CIV), a multisubunit enzyme composed of a catalytic core of 3 subunits and several supernumerary subunits. The complex exists as a monomer or a dimer and forms supercomplexes (SCs) in the inner mitochondrial membrane with ubiquinol-cytochrome c oxidoreductase (cytochrome b-c1 complex, complex III, CIII). Slime mold cytochrome c oxidase consists of at least seven different polypeptides species, subunits I, II, III, IV, V, VI, and VIIe/s in order of MW.

Its subcellular location is the mitochondrion inner membrane. It functions in the pathway energy metabolism; oxidative phosphorylation. Functionally, component of the cytochrome c oxidase, the last enzyme in the mitochondrial electron transport chain which drives oxidative phosphorylation. The respiratory chain contains 3 multisubunit complexes succinate dehydrogenase (complex II, CII), ubiquinol-cytochrome c oxidoreductase (cytochrome b-c1 complex, complex III, CIII) and cytochrome c oxidase (complex IV, CIV), that cooperate to transfer electrons derived from NADH and succinate to molecular oxygen, creating an electrochemical gradient over the inner membrane that drives transmembrane transport and the ATP synthase. Cytochrome c oxidase is the component of the respiratory chain that catalyzes the reduction of oxygen to water. Electrons originating from reduced cytochrome c in the intermembrane space (IMS) are transferred via the dinuclear copper A center (CU(A)) of subunit 2 and heme A of subunit 1 to the active site in subunit 1, a binuclear center (BNC) formed by heme A3 and copper B (CU(B)). The BNC reduces molecular oxygen to 2 water molecules using 4 electrons from cytochrome c in the IMS and 4 protons from the mitochondrial matrix. The sequence is that of Cytochrome c oxidase subunit 5 (cxeA) from Dictyostelium discoideum (Social amoeba).